Reading from the N-terminus, the 79-residue chain is Sulfur carrier protein TusA (79 aa).

Cys17 (cysteine persulfide intermediate) is an active-site residue.

This sequence belongs to the sulfur carrier protein TusA family.

It is found in the cytoplasm. Its function is as follows. Sulfur carrier protein which probably makes part of a sulfur-relay system. This Actinobacillus pleuropneumoniae serotype 7 (strain AP76) protein is Sulfur carrier protein TusA.